The following is a 352-amino-acid chain: MRVTTLSTALFALASTAVSAPTAGSSSPGLEVKLTQIDNTRVKAVVKNTGSEEVSFVHLNFFKDAGPVKKVSIYRGQDEVQFEGIKRRLRSSGITKEAVTSLGAGETLEDEFDIASTSDLASGGPVSIRSHGFVPIVVDGKITGYIPYKSNDLTVNVDGGKAAKVTKALSQLTRRTEVTDCKGDAESSLTTALSNAAKLANQAAEAAESGDESKFEEYFKTTDQQTRTTVAERLRAVAKEAGSTSGGSTTYHCNDPYGYCEPNVLAYTLPSKNEIANCDIYYSELPPLAQKCHAQDQATTTLHEFTHAPGVYQPGTEDLGYGYDAATQLSAQDALNNADSYALYANAIELKC.

Positions 1–19 (MRVTTLSTALFALASTAVS) are cleaved as a signal peptide. The propeptide occupies 20–175 (APTAGSSSPG…TKALSQLTRR (156 aa)). Intrachain disulfides connect C181/C253, C260/C278, and C292/C352. H303 serves as a coordination point for Zn(2+). Residue E304 is part of the active site. Positions 307 and 318 each coordinate Zn(2+).

This sequence belongs to the peptidase M35 family. Requires Zn(2+) as cofactor.

The catalysed reaction is Preferential cleavage of bonds with hydrophobic residues in P1'. Also 3-Asn-|-Gln-4 and 8-Gly-|-Ser-9 bonds in insulin B chain.. Its function is as follows. Metalloprotease that shows high activities on basic nuclear substrates such as histone and protamine. The protein is Neutral protease 2 of Aspergillus oryzae (strain ATCC 42149 / RIB 40) (Yellow koji mold).